The chain runs to 207 residues: Ribosome maturation factor RimM (207 aa).

A PRC barrel domain is found at 114–207 (DDEYYWVDLI…RIDSDWPLDY (94 aa)).

The protein belongs to the RimM family. As to quaternary structure, binds ribosomal protein uS19.

It is found in the cytoplasm. Its function is as follows. An accessory protein needed during the final step in the assembly of 30S ribosomal subunit, possibly for assembly of the head region. Essential for efficient processing of 16S rRNA. May be needed both before and after RbfA during the maturation of 16S rRNA. It has affinity for free ribosomal 30S subunits but not for 70S ribosomes. The chain is Ribosome maturation factor RimM from Bordetella bronchiseptica (strain ATCC BAA-588 / NCTC 13252 / RB50) (Alcaligenes bronchisepticus).